The primary structure comprises 571 residues: Proline--tRNA ligase (571 aa).

This sequence belongs to the class-II aminoacyl-tRNA synthetase family. ProS type 1 subfamily. In terms of assembly, homodimer.

Its subcellular location is the cytoplasm. It carries out the reaction tRNA(Pro) + L-proline + ATP = L-prolyl-tRNA(Pro) + AMP + diphosphate. Its function is as follows. Catalyzes the attachment of proline to tRNA(Pro) in a two-step reaction: proline is first activated by ATP to form Pro-AMP and then transferred to the acceptor end of tRNA(Pro). As ProRS can inadvertently accommodate and process non-cognate amino acids such as alanine and cysteine, to avoid such errors it has two additional distinct editing activities against alanine. One activity is designated as 'pretransfer' editing and involves the tRNA(Pro)-independent hydrolysis of activated Ala-AMP. The other activity is designated 'posttransfer' editing and involves deacylation of mischarged Ala-tRNA(Pro). The misacylated Cys-tRNA(Pro) is not edited by ProRS. This is Proline--tRNA ligase from Shewanella frigidimarina (strain NCIMB 400).